The chain runs to 325 residues: Beta-ketoacyl-[acyl-carrier-protein] synthase III (325 aa).

Residues C119 and H252 contribute to the active site. The interval 253–257 (QANIR) is ACP-binding. Residue N282 is part of the active site.

This sequence belongs to the thiolase-like superfamily. FabH family. As to quaternary structure, homodimer.

It is found in the cytoplasm. It carries out the reaction malonyl-[ACP] + acetyl-CoA + H(+) = 3-oxobutanoyl-[ACP] + CO2 + CoA. Its pathway is lipid metabolism; fatty acid biosynthesis. Functionally, catalyzes the condensation reaction of fatty acid synthesis by the addition to an acyl acceptor of two carbons from malonyl-ACP. Catalyzes the first condensation reaction which initiates fatty acid synthesis and may therefore play a role in governing the total rate of fatty acid production. Possesses both acetoacetyl-ACP synthase and acetyl transacylase activities. Its substrate specificity determines the biosynthesis of branched-chain and/or straight-chain of fatty acids. The chain is Beta-ketoacyl-[acyl-carrier-protein] synthase III from Verminephrobacter eiseniae (strain EF01-2).